The following is a 363-amino-acid chain: Circumsporozoite protein (363 aa).

The signal sequence occupies residues 1–22 (MKNFILLAVSSILLVDLLPTHF). The segment covering 48–57 (GAQQVRQSAS) has biased composition (polar residues). Positions 48–278 (GAQQVRQSAS…GQNNQGANAP (231 aa)) are disordered. The segment covering 61–96 (GLGEKPKEGADKEKKKEKGKEKEEEPKKPNENKLKQ) has biased composition (basic and acidic residues). The segment at 80–88 (KEKEEEPKK) is required for the binding to heparan sulfate proteoglycans (HSPGs) on the surface of host hepatocytes. Residues 93 to 97 (KLKQP) are region I; contains the proteolytic cleavage site. Residues 98–109 (NEGQPQAQGDGA) form a 1; approximate repeat. The segment at 98-241 (NEGQPQAQGD…GQPQAQGDGA (144 aa)) is 12 X 12 AA approximate tandem repeats of N-A-G-Q-P-Q-A-Q-G-D-G-A. 11 consecutive repeat copies span residues 110–121 (NAGQPQAQGDGA), 122–133 (NAGQPQAQGDGA), 134–145 (NAGQPQAQGDGA), 146–157 (NAGQPQAQGDGA), 158–169 (NAGQPQAQGDGA), 170–181 (NAGQPQAQGDGA), 182–193 (NAGQPQAQGDGA), 194–205 (NAGQPQAQGDGA), 206–217 (NAGQPQAQGDGA), 218–229 (NAGQPQAQGDGA), and 230–241 (NAGQPQAQGDGA). The segment covering 248-259 (RNGGGAPAGGNE) has biased composition (gly residues). Positions 260–277 (GNKQAGKGQGQNNQGANA) are enriched in low complexity. Positions 289 to 341 (KIRSSVTTEWTPCSVTCGNGVRIRRKAHAGNKKAEDLTMDDLEVEACVMDKCA) constitute a TSP type-1 domain. 2 cysteine pairs are disulfide-bonded: Cys-301-Cys-335 and Cys-305-Cys-340. Thr-304 is a glycosylation site (O-linked (Fuc) threonine). Cys-340 is lipidated: GPI-anchor amidated cysteine. A propeptide spans 341 to 363 (AGIFNVVSNSLGLVILLVLALFN) (removed in mature form).

The protein belongs to the plasmodium circumsporozoite protein family. During host cell invasion, proteolytically cleaved at the cell membrane in the region I by a papain-like cysteine protease of parasite origin. Cleavage is triggered by the sporozoite contact with highly sulfated heparan sulfate proteoglycans (HSPGs) present on the host hepatocyte cell surface. Cleavage exposes the TSP type-1 (TSR) domain and is required for productive invasion of host hepatocytes but not for adhesion to the host cell membrane. Cleavage is dispensable for sporozoite development in the oocyst, motility and for traversal of host and vector cells. In terms of processing, O-glycosylated; maybe by POFUT2.

The protein localises to the cell membrane. The protein resides in the cytoplasm. In terms of biological role, essential sporozoite protein. In the mosquito vector, required for sporozoite development in the oocyst, migration through the vector hemolymph and entry into the vector salivary glands. In the vertebrate host, required for sporozoite migration through the host dermis and infection of host hepatocytes. Binds to highly sulfated heparan sulfate proteoglycans (HSPGs) on the surface of host hepatocytes. Functionally, in the vertebrate host, binds to highly sulfated heparan sulfate proteoglycans (HSPGs) on the surface of host hepatocytes and is required for sporozoite invasion of the host hepatocytes. This Plasmodium knowlesi (strain H) protein is Circumsporozoite protein.